The chain runs to 821 residues: DNA ligase (821 aa).

Residues 33–37 (DVDYD), 82–83 (SL), and E113 contribute to the NAD(+) site. K115 acts as the N6-AMP-lysine intermediate in catalysis. R136, E173, K290, and K314 together coordinate NAD(+). Zn(2+) contacts are provided by C408, C411, C426, and C432. A BRCT domain is found at 741 to 821 (IVAGPLDGQT…RLLAYLAEHE (81 aa)).

It belongs to the NAD-dependent DNA ligase family. LigA subfamily. The cofactor is Mg(2+). Mn(2+) is required as a cofactor.

It catalyses the reaction NAD(+) + (deoxyribonucleotide)n-3'-hydroxyl + 5'-phospho-(deoxyribonucleotide)m = (deoxyribonucleotide)n+m + AMP + beta-nicotinamide D-nucleotide.. Functionally, DNA ligase that catalyzes the formation of phosphodiester linkages between 5'-phosphoryl and 3'-hydroxyl groups in double-stranded DNA using NAD as a coenzyme and as the energy source for the reaction. It is essential for DNA replication and repair of damaged DNA. The polypeptide is DNA ligase (Stenotrophomonas maltophilia (strain K279a)).